Here is a 657-residue protein sequence, read N- to C-terminus: ER degradation-enhancing alpha-mannosidase-like protein 1 (657 aa).

At 1–4 (MQWR) the chain is on the cytoplasmic side. A helical; Signal-anchor for type II membrane protein transmembrane segment spans residues 5–25 (ALVLGLVLLRLGLHGVLWLVF). Residues 26–657 (GLGPSMGFYQ…RQIDQMVGLI (632 aa)) lie on the Lumenal side of the membrane. The tract at residues 48 to 94 (SPDGPASPTSGPVGRPGGVSGPSWLQPPGTGAAQSPRKAPRRPGPGM) is disordered. N-linked (GlcNAc...) asparagine glycans are attached at residues N181, N198, N299, N342, and N624.

The protein belongs to the glycosyl hydrolase 47 family. As to quaternary structure, interacts with DNAJC10. Interacts with DERL2 and DERL3. Binds to SEL1L.

The protein localises to the endoplasmic reticulum membrane. In terms of biological role, extracts misfolded glycoproteins, but not glycoproteins undergoing productive folding, from the calnexin cycle. It is directly involved in endoplasmic reticulum-associated degradation (ERAD) and targets misfolded glycoproteins for degradation in an N-glycan-independent manner, probably by forming a complex with SEL1L. It has low mannosidase activity, catalyzing mannose trimming from Man8GlcNAc2 to Man7GlcNAc2. The polypeptide is ER degradation-enhancing alpha-mannosidase-like protein 1 (EDEM1) (Homo sapiens (Human)).